Here is a 411-residue protein sequence, read N- to C-terminus: Serine hydroxymethyltransferase (411 aa).

(6S)-5,6,7,8-tetrahydrofolate is bound by residues Leu119 and 123–125; that span reads GHL. Lys228 is modified (N6-(pyridoxal phosphate)lysine). 351 to 353 is a binding site for (6S)-5,6,7,8-tetrahydrofolate; that stretch reads SPF.

It belongs to the SHMT family. In terms of assembly, homodimer. Pyridoxal 5'-phosphate is required as a cofactor.

The protein localises to the cytoplasm. It catalyses the reaction (6R)-5,10-methylene-5,6,7,8-tetrahydrofolate + glycine + H2O = (6S)-5,6,7,8-tetrahydrofolate + L-serine. The protein operates within one-carbon metabolism; tetrahydrofolate interconversion. Its pathway is amino-acid biosynthesis; glycine biosynthesis; glycine from L-serine: step 1/1. Its function is as follows. Catalyzes the reversible interconversion of serine and glycine with tetrahydrofolate (THF) serving as the one-carbon carrier. This reaction serves as the major source of one-carbon groups required for the biosynthesis of purines, thymidylate, methionine, and other important biomolecules. Also exhibits THF-independent aldolase activity toward beta-hydroxyamino acids, producing glycine and aldehydes, via a retro-aldol mechanism. This Clostridium beijerinckii (strain ATCC 51743 / NCIMB 8052) (Clostridium acetobutylicum) protein is Serine hydroxymethyltransferase.